The primary structure comprises 398 residues: S-adenosylmethionine synthase (398 aa).

His-17 lines the ATP pocket. Asp-19 contacts Mg(2+). Glu-45 serves as a coordination point for K(+). L-methionine contacts are provided by Glu-58 and Gln-101. Positions 101–111 (QSPDIAQGVDK) are flexible loop. ATP contacts are provided by residues 176 to 178 (DGK), 243 to 244 (RF), Asp-252, 258 to 259 (RK), and Lys-279. An L-methionine-binding site is contributed by Asp-252. Lys-283 is an L-methionine binding site.

It belongs to the AdoMet synthase family. In terms of assembly, homotetramer; dimer of dimers. It depends on Mg(2+) as a cofactor. The cofactor is K(+).

The protein localises to the cytoplasm. The enzyme catalyses L-methionine + ATP + H2O = S-adenosyl-L-methionine + phosphate + diphosphate. It functions in the pathway amino-acid biosynthesis; S-adenosyl-L-methionine biosynthesis; S-adenosyl-L-methionine from L-methionine: step 1/1. Catalyzes the formation of S-adenosylmethionine (AdoMet) from methionine and ATP. The overall synthetic reaction is composed of two sequential steps, AdoMet formation and the subsequent tripolyphosphate hydrolysis which occurs prior to release of AdoMet from the enzyme. In Staphylococcus aureus (strain Mu3 / ATCC 700698), this protein is S-adenosylmethionine synthase.